Consider the following 206-residue polypeptide: Large ribosomal subunit protein uL3 (206 aa).

The interval 126-155 (HGHAGGPGAHGSRFHRHPGSMGANSTPSRV) is disordered.

Belongs to the universal ribosomal protein uL3 family. In terms of assembly, part of the 50S ribosomal subunit. Forms a cluster with proteins L14 and L19.

In terms of biological role, one of the primary rRNA binding proteins, it binds directly near the 3'-end of the 23S rRNA, where it nucleates assembly of the 50S subunit. In Leptospira interrogans serogroup Icterohaemorrhagiae serovar copenhageni (strain Fiocruz L1-130), this protein is Large ribosomal subunit protein uL3.